Here is a 351-residue protein sequence, read N- to C-terminus: tRNA-splicing endonuclease (351 aa).

Catalysis depends on residues Tyr287, His298, and Lys329.

The protein belongs to the tRNA-intron endonuclease family. Archaeal long subfamily. In terms of assembly, homodimer.

The catalysed reaction is pretRNA = a 3'-half-tRNA molecule with a 5'-OH end + a 5'-half-tRNA molecule with a 2',3'-cyclic phosphate end + an intron with a 2',3'-cyclic phosphate and a 5'-hydroxyl terminus.. In terms of biological role, endonuclease that removes tRNA introns. Cleaves pre-tRNA at the 5'- and 3'-splice sites to release the intron. The products are an intron and two tRNA half-molecules bearing 2',3' cyclic phosphate and 5'-OH termini. Recognizes a pseudosymmetric substrate in which 2 bulged loops of 3 bases are separated by a stem of 4 bp. The chain is tRNA-splicing endonuclease from Methanococcoides burtonii (strain DSM 6242 / NBRC 107633 / OCM 468 / ACE-M).